A 188-amino-acid chain; its full sequence is MPHSSSGAPLDPVAFIHSQIRTVPDWPQPGVMFRDITTLLQSPKALRILVDLFVERYVDAKLDYVAGLDARGFIIAPIVAYELSVGFVPIRKVGKLPYKTRSESYDLEYGSATVEIHEDACRPGDRVIIMDDLIATGGTMMAGRNLLQRLGAEVVEGAAIIDLPDLGGSALLRNAGLPVYTVTEFAGH.

The protein belongs to the purine/pyrimidine phosphoribosyltransferase family. In terms of assembly, homodimer.

It is found in the cytoplasm. It carries out the reaction AMP + diphosphate = 5-phospho-alpha-D-ribose 1-diphosphate + adenine. The protein operates within purine metabolism; AMP biosynthesis via salvage pathway; AMP from adenine: step 1/1. Catalyzes a salvage reaction resulting in the formation of AMP, that is energically less costly than de novo synthesis. This Burkholderia lata (strain ATCC 17760 / DSM 23089 / LMG 22485 / NCIMB 9086 / R18194 / 383) protein is Adenine phosphoribosyltransferase.